Consider the following 210-residue polypeptide: dTTP/UTP pyrophosphatase (210 aa).

Asp-89 (proton acceptor) is an active-site residue.

It belongs to the Maf family. YhdE subfamily. Requires a divalent metal cation as cofactor.

It is found in the cytoplasm. It catalyses the reaction dTTP + H2O = dTMP + diphosphate + H(+). The catalysed reaction is UTP + H2O = UMP + diphosphate + H(+). In terms of biological role, nucleoside triphosphate pyrophosphatase that hydrolyzes dTTP and UTP. May have a dual role in cell division arrest and in preventing the incorporation of modified nucleotides into cellular nucleic acids. This is dTTP/UTP pyrophosphatase from Burkholderia thailandensis (strain ATCC 700388 / DSM 13276 / CCUG 48851 / CIP 106301 / E264).